The chain runs to 130 residues: Small ribosomal subunit protein uS11c (130 aa).

It belongs to the universal ribosomal protein uS11 family. In terms of assembly, part of the 30S ribosomal subunit.

Its subcellular location is the plastid. It localises to the cyanelle. The polypeptide is Small ribosomal subunit protein uS11c (Cyanophora paradoxa).